The chain runs to 41 residues: Large ribosomal subunit protein bL36 (41 aa).

Belongs to the bacterial ribosomal protein bL36 family.

This chain is Large ribosomal subunit protein bL36, found in Rhodopseudomonas palustris (strain BisB18).